The primary structure comprises 262 residues: Hydroxyethylthiazole kinase (262 aa).

Methionine 44 lines the substrate pocket. Residues arginine 118 and threonine 166 each contribute to the ATP site. Glycine 193 is a substrate binding site.

It belongs to the Thz kinase family. It depends on Mg(2+) as a cofactor.

It carries out the reaction 5-(2-hydroxyethyl)-4-methylthiazole + ATP = 4-methyl-5-(2-phosphooxyethyl)-thiazole + ADP + H(+). It participates in cofactor biosynthesis; thiamine diphosphate biosynthesis; 4-methyl-5-(2-phosphoethyl)-thiazole from 5-(2-hydroxyethyl)-4-methylthiazole: step 1/1. Its function is as follows. Catalyzes the phosphorylation of the hydroxyl group of 4-methyl-5-beta-hydroxyethylthiazole (THZ). In Chlamydia caviae (strain ATCC VR-813 / DSM 19441 / 03DC25 / GPIC) (Chlamydophila caviae), this protein is Hydroxyethylthiazole kinase.